The sequence spans 45 residues: MKMFLFLNESYIFDRLRMWSIVLWHSCVFVCAECENANYRGAEVP.

Belongs to the UPF0377 family.

The polypeptide is Putative UPF0377 protein YJL222W-B (Saccharomyces cerevisiae (strain ATCC 204508 / S288c) (Baker's yeast)).